Reading from the N-terminus, the 222-residue chain is Extracellular protein ARB_03106 (222 aa).

Residues 1-18 (MRLHSVLAVATAVGCAVA) form the signal peptide. 2 N-linked (GlcNAc...) asparagine glycosylation sites follow: asparagine 113 and asparagine 126.

Its subcellular location is the secreted. This is Extracellular protein ARB_03106 from Arthroderma benhamiae (strain ATCC MYA-4681 / CBS 112371) (Trichophyton mentagrophytes).